A 160-amino-acid chain; its full sequence is Ribosome maturation factor RimP (160 aa).

Belongs to the RimP family.

Its subcellular location is the cytoplasm. Functionally, required for maturation of 30S ribosomal subunits. The sequence is that of Ribosome maturation factor RimP from Citrifermentans bemidjiense (strain ATCC BAA-1014 / DSM 16622 / JCM 12645 / Bem) (Geobacter bemidjiensis).